Here is a 574-residue protein sequence, read N- to C-terminus: NEDD4-binding protein 2-like 2 (574 aa).

Disordered stretches follow at residues 82–110 (HKEMPGDKVGGTESIGSQALQDGKPLAPA), 127–161 (YKPPEKKKCRERKNETATFNNTDSKRRQEEKQKFN), 182–204 (ENENEASQGSCKEPEPSQEQTLS), and 542–574 (TQKSTQTPLPLQGDQRWGGSLGSHSQVSITDDY). Composition is skewed to basic and acidic residues over residues 129 to 141 (PPEKKKCRERKNE) and 149 to 161 (DSKRRQEEKQKFN). Residues 162–196 (SKKLEIDTELSQFYKEIEELENENEASQGSCKEPE) adopt a coiled-coil conformation. Over residues 563–574 (GSHSQVSITDDY) the composition is skewed to polar residues.

This is NEDD4-binding protein 2-like 2 (N4bp2l2) from Rattus norvegicus (Rat).